Reading from the N-terminus, the 116-residue chain is MIVGVGIDVVDVARFLAALDRSPRLRDRLFTPEERDLVGGSLAARFAAKEAIAKALGAPGGMRWHDATVARVPGGAPAVSLRGTVLAVADGLGITSWHLSLSHDAGIASAIAVAER.

Mg(2+) is bound by residues Asp8 and Glu50.

This sequence belongs to the P-Pant transferase superfamily. AcpS family. Mg(2+) is required as a cofactor.

Its subcellular location is the cytoplasm. The catalysed reaction is apo-[ACP] + CoA = holo-[ACP] + adenosine 3',5'-bisphosphate + H(+). Its function is as follows. Transfers the 4'-phosphopantetheine moiety from coenzyme A to a Ser of acyl-carrier-protein. The polypeptide is Holo-[acyl-carrier-protein] synthase (Beutenbergia cavernae (strain ATCC BAA-8 / DSM 12333 / CCUG 43141 / JCM 11478 / NBRC 16432 / NCIMB 13614 / HKI 0122)).